Here is a 130-residue protein sequence, read N- to C-terminus: uncharacterized protein (130 aa).

Met-1 is subject to N-acetylmethionine.

Homotetramer.

This is an uncharacterized protein from Arabidopsis thaliana (Mouse-ear cress).